Reading from the N-terminus, the 192-residue chain is Fe/S biogenesis protein NfuA (192 aa).

C149 and C152 together coordinate [4Fe-4S] cluster.

It belongs to the NfuA family. Homodimer. [4Fe-4S] cluster is required as a cofactor.

In terms of biological role, involved in iron-sulfur cluster biogenesis. Binds a 4Fe-4S cluster, can transfer this cluster to apoproteins, and thereby intervenes in the maturation of Fe/S proteins. Could also act as a scaffold/chaperone for damaged Fe/S proteins. The protein is Fe/S biogenesis protein NfuA of Idiomarina loihiensis (strain ATCC BAA-735 / DSM 15497 / L2-TR).